We begin with the raw amino-acid sequence, 632 residues long: Asparagine synthetase [glutamine-hydrolyzing] 1 (632 aa).

The active-site For GATase activity is the C2. Positions 2–214 (CGFVGVFNKH…PGSQFTIRPD (213 aa)) constitute a Glutamine amidotransferase type-2 domain. L-glutamine is bound by residues 52–56 (RLSII), 77–79 (NGE), and D102. Residues V288 and 361–362 (SG) each bind ATP.

This sequence belongs to the asparagine synthetase family.

It carries out the reaction L-aspartate + L-glutamine + ATP + H2O = L-asparagine + L-glutamate + AMP + diphosphate + H(+). It functions in the pathway amino-acid biosynthesis; L-asparagine biosynthesis; L-asparagine from L-aspartate (L-Gln route): step 1/1. In terms of biological role, main asparagine synthetase in vegetative cells. In Bacillus subtilis (strain 168), this protein is Asparagine synthetase [glutamine-hydrolyzing] 1 (asnB).